We begin with the raw amino-acid sequence, 313 residues long: tRNA pseudouridine synthase B (313 aa).

H44 lines the substrate pocket. D49 (nucleophile) is an active-site residue. The substrate site is built by Y77, Y180, and L201.

The protein belongs to the pseudouridine synthase TruB family. Type 1 subfamily.

The catalysed reaction is uridine(55) in tRNA = pseudouridine(55) in tRNA. In terms of biological role, responsible for synthesis of pseudouridine from uracil-55 in the psi GC loop of transfer RNAs. The chain is tRNA pseudouridine synthase B from Hamiltonella defensa subsp. Acyrthosiphon pisum (strain 5AT).